Consider the following 502-residue polypeptide: Sodium/proline symporter (502 aa).

The Periplasmic portion of the chain corresponds to 1–5 (MAIST). The helical transmembrane segment at 6–26 (PMLVTFCVYIFGMILIGFIAW) threads the bilayer. Topologically, residues 27–41 (RSTKNFDDYILGGRS) are cytoplasmic. Hydrophilic stretches follow at residues 27–66 (RSTKNFDDYILGGRSLGPFVTALSAGASDMSGWLLMGLPG) and 88–124 (INWKLVAGRLRVHTEYNNNALTLPDYFTGRFEDKSRI). Residues 42–62 (LGPFVTALSAGASDMSGWLLM) traverse the membrane as a helical segment. The Periplasmic portion of the chain corresponds to 63–67 (GLPGA). A helical membrane pass occupies residues 68–88 (VFLSGISESWIAIGLTLGAWI). Residues 89-126 (NWKLVAGRLRVHTEYNNNALTLPDYFTGRFEDKSRILR) are Cytoplasmic-facing. A helical membrane pass occupies residues 127 to 147 (IISALVILLFFTIYCASGIVA). The Periplasmic portion of the chain corresponds to 148–162 (GARLFESTFGMSYET). Residues 151-162 (LFESTFGMSYET) are hydrophilic. The helical transmembrane segment at 163-183 (ALWAGAAATILYTFIGGFLAV) threads the bilayer. At 184 to 192 (SWTDTVQAS) the chain is on the cytoplasmic side. The hydrophilic stretch occupies residues 185-189 (WTDTV). Residues 193–213 (LMIFALILTPVIVIISVGGFG) form a helical membrane-spanning segment. 3 hydrophilic regions span residues 214–231 (DSLEVIKQKSIENVDMLK), 249–274 (FGQPHILARFMAADSHHSIVHARRIS), and 296–319 (FNDHPALAGAVNQNAERVFIELAQ). Topologically, residues 214–234 (DSLEVIKQKSIENVDMLKGLN) are periplasmic. A helical membrane pass occupies residues 235 to 255 (FVAIISLMGWGLGYFGQPHIL). Topologically, residues 256–275 (ARFMAADSHHSIVHARRISM) are cytoplasmic. A helical membrane pass occupies residues 276 to 296 (TWMILCLAGAVAVGFFGIAYF). Topologically, residues 297 to 319 (NDHPALAGAVNQNAERVFIELAQ) are periplasmic. Residues 320 to 340 (ILFNPWIAGILLSAILAAVMS) traverse the membrane as a helical segment. Over 341–370 (TLSCQLLVCSSAITEDLYKAFLRKHASQKE) the chain is Cytoplasmic. The segment at 341-370 (TLSCQLLVCSSAITEDLYKAFLRKHASQKE) is hydrophilic. Residues 371 to 391 (LVWVGRVMVLVVALVAIALAA) traverse the membrane as a helical segment. At 392–397 (NPENRV) the chain is on the periplasmic side. Positions 392 to 397 (NPENRV) are hydrophilic. The helical transmembrane segment at 398 to 418 (LGLVSYAWAGFGAAFGPVVLF) threads the bilayer. Residues 419–427 (SVMWSRMTR) are Cytoplasmic-facing. Hydrophilic stretches follow at residues 424–430 (RMTRNGA) and 446–448 (QFG). Transmembrane regions (helical) follow at residues 428-448 (NGALAGMIIGALTVIVWKQFG) and 449-469 (WLGLYEIIPGFIFGSIGIVVF). Topologically, residues 470 to 502 (SLLGKAPSAAMQKRFAEADAHYHSAPPSRLQES) are cytoplasmic. Residues 476 to 502 (PSAAMQKRFAEADAHYHSAPPSRLQES) form a hydrophilic region.

This sequence belongs to the sodium:solute symporter (SSF) (TC 2.A.21) family. In terms of assembly, has been isolated from inner membrane preparations as a homodimer.

Its subcellular location is the cell inner membrane. The catalysed reaction is L-proline(in) + Na(+)(in) = L-proline(out) + Na(+)(out). Activity is stimulated by phosphatidylethanolamine and phosphatidylglycerol, but not by phosphatidylcholine and cardiolipin. Proline uptake is inhibited by the sulfhydryl reagent N-ethylmaleimide (NEM). Proline, in the presence of Na(+) or Li(+), protects the carrier functions from NEM-inactivation. Its function is as follows. Catalyzes the sodium-dependent uptake of extracellular L-proline. This protein is also capable of using lithium as the transport cation. Also catalyzes the uptake of propionate. The protein is Sodium/proline symporter (putP) of Escherichia coli (strain K12).